The sequence spans 164 residues: Cytochrome c-type biogenesis protein CcmE (164 aa).

Topologically, residues 1 to 7 are cytoplasmic; sequence MTRKQRR. Residues 8–28 form a helical; Signal-anchor for type II membrane protein membrane-spanning segment; it reads LLMIGGAGVVLVVAVGLVLNA. The Periplasmic portion of the chain corresponds to 29 to 164; sequence MRGSIVFFST…ASADAAGPSR (136 aa). Heme is bound by residues H122 and Y126. Basic and acidic residues predominate over residues 137–149; that stretch reads KQGHWKDDYEKKP. Residues 137-164 form a disordered region; the sequence is KQGHWKDDYEKKPPGAPGASADAAGPSR. The segment covering 153–164 has biased composition (low complexity); that stretch reads PGASADAAGPSR.

It belongs to the CcmE/CycJ family.

The protein resides in the cell inner membrane. Heme chaperone required for the biogenesis of c-type cytochromes. Transiently binds heme delivered by CcmC and transfers the heme to apo-cytochromes in a process facilitated by CcmF and CcmH. This Rhodopseudomonas palustris (strain BisB5) protein is Cytochrome c-type biogenesis protein CcmE.